A 415-amino-acid chain; its full sequence is MPTWTEYIFQRKLGRAPSPGDVVEVVPDLVGFHDLTGYHVLEVLESMGKVEVFDKGRVVVAFDHLSPPPTQRAAEIMVYIRKHVKALGLPNFYDVGGGILHQIILEKYAMPEYVIFAADSHTNTAGAVGAFAHGMGATDIAAALKLGRTWVVVPAPFRVDVRGEFPPGVMGKDVALHLLKQFGAEGFNGYSVEVFVERPKAFPMDDRATVANMSTEMGADALMFIPDEVTADYLQRERGVSYKPPSLEPGRYVDRYEVELQRLEPLVAAPYSVDNVKAAREVEGVEVDQVFIGSCTNGRLSDFEVAARVLKRGRAKARCIAIPASYAVFRRAMELGYIDVLTKAGCVVTYGTCGPCLGGHFGVAGPGEVVVTTSNRNFKGRVGHPDSKVYLANPATAAAAALEGKIVDPRPYLAP.

[4Fe-4S] cluster is bound by residues Cys295, Cys353, and Cys356.

The protein belongs to the aconitase/IPM isomerase family. LeuC type 2 subfamily. As to quaternary structure, heterodimer of LeuC and LeuD. Requires [4Fe-4S] cluster as cofactor.

It carries out the reaction (2R,3S)-3-isopropylmalate = (2S)-2-isopropylmalate. The protein operates within amino-acid biosynthesis; L-leucine biosynthesis; L-leucine from 3-methyl-2-oxobutanoate: step 2/4. Its function is as follows. Catalyzes the isomerization between 2-isopropylmalate and 3-isopropylmalate, via the formation of 2-isopropylmaleate. In Pyrobaculum neutrophilum (strain DSM 2338 / JCM 9278 / NBRC 100436 / V24Sta) (Thermoproteus neutrophilus), this protein is 3-isopropylmalate dehydratase large subunit.